Here is a 418-residue protein sequence, read N- to C-terminus: Mitochondrial distribution and morphology protein 10 (418 aa).

The protein belongs to the MDM10 family. As to quaternary structure, component of the ER-mitochondria encounter structure (ERMES) or MDM complex, composed of MMM1, MDM10, MDM12 and MDM34. Associates with the mitochondrial outer membrane sorting assembly machinery SAM(core) complex.

Its subcellular location is the mitochondrion outer membrane. Its function is as follows. Component of the ERMES/MDM complex, which serves as a molecular tether to connect the endoplasmic reticulum and mitochondria. Components of this complex are involved in the control of mitochondrial shape and protein biogenesis and may function in phospholipid exchange. MDM10 is involved in the late assembly steps of the general translocase of the mitochondrial outer membrane (TOM complex). Functions in the TOM40-specific route of the assembly of outer membrane beta-barrel proteins, including the association of TOM40 with the receptor TOM22 and small TOM proteins. Can associate with the SAM(core) complex as well as the MDM12-MMM1 complex, both involved in late steps of the major beta-barrel assembly pathway, that is responsible for biogenesis of all outer membrane beta-barrel proteins. May act as a switch that shuttles between both complexes and channels precursor proteins into the TOM40-specific pathway. Plays a role in mitochondrial morphology and in the inheritance of mitochondria. In Meyerozyma guilliermondii (strain ATCC 6260 / CBS 566 / DSM 6381 / JCM 1539 / NBRC 10279 / NRRL Y-324) (Yeast), this protein is Mitochondrial distribution and morphology protein 10.